A 460-amino-acid polypeptide reads, in one-letter code: Lysosomal proton-coupled steroid conjugate and bile acid symporter SLC46A3 (460 aa).

The first 25 residues, 1–25 (MKISFIEPAILLNAFAMTLTIPLTA), serve as a signal peptide directing secretion. At 26 to 73 (QYVYRRIWEETGNYTFASNSNGSECDQNKSSSIFAFREEVQKKASLFN) the chain is on the extracellular side. 3 N-linked (GlcNAc...) asparagine glycosylation sites follow: Asn-38, Asn-46, and Asn-53. Residues 74–94 (LQVEMSALIPGLVSTFMLLAS) form a helical membrane-spanning segment. Topologically, residues 95–111 (SDNHGRKLPMVLSSLGS) are cytoplasmic. Residues 112–132 (LGTNTWLCMMSYFDLPLQLLI) traverse the membrane as a helical segment. Topologically, residues 133–135 (AST) are extracellular. The helical transmembrane segment at 136-156 (FIGALFGNYTTFWGACFAYIV) threads the bilayer. The Cytoplasmic segment spans residues 157-170 (DQQKEYKHRIIRIA). The helical transmembrane segment at 171–191 (ILDFMLGVVTGLTGLSSGYFI) threads the bilayer. Topologically, residues 192-195 (RELG) are extracellular. Residues 196-216 (FVWSYFITAMVLIVNLAYILF) form a helical membrane-spanning segment. Residues 217–257 (FLNDPIKESSSQIVTMSCIESLKDLFYRTYMLFKNGSSKRQ) are Cytoplasmic-facing. A helical transmembrane segment spans residues 258-278 (ALLCLLIFTLVIYFFVIIGIS). Residues 279–301 (PIFTLYELGPPLCWNEVYIGYGS) lie on the Extracellular side of the membrane. A helical transmembrane segment spans residues 302-322 (ALGSVSFLSSFLGIWLFSYCL). Residues 323–324 (KD) lie on the Cytoplasmic side of the membrane. Residues 325-345 (IHIAYIGIFTTMVGMTLAAFT) traverse the membrane as a helical segment. Residues 346 to 347 (RT) lie on the Extracellular side of the membrane. Residues 348 to 368 (TLMMFLVRIPFIFTIMPLSVL) traverse the membrane as a helical segment. Residues 369–381 (RSMLSKVVHSTEQ) lie on the Cytoplasmic side of the membrane. A helical membrane pass occupies residues 382 to 402 (GALFACIAFLETLAGVTSTSA). The Extracellular portion of the chain corresponds to 403-410 (YSGIYSAT). A helical transmembrane segment spans residues 411–431 (VAWYPGFIFLLSAGLLVLPAI). Residues 432 to 460 (SLCCVKSIGWEEGSYTLLVHEEPSEHTSD) lie on the Cytoplasmic side of the membrane. The short motif at 446–449 (YTLL) is the Tyrosine-based lysosomal-sorting motif element.

Belongs to the major facilitator superfamily. SLC46A family. In terms of tissue distribution, expressed in liver, kidney, small intestine and colon.

It is found in the lysosome membrane. It carries out the reaction estrone 3-sulfate(out) + n H(+)(out) = estrone 3-sulfate(in) + n H(+)(in). The enzyme catalyses 25-hydroxyvitamin D3 sulfate(out) + n H(+)(out) = 25-hydroxyvitamin D3 sulfate(in) + n H(+)(in). It catalyses the reaction cholate(out) + n H(+)(out) = cholate(in) + n H(+)(in). The catalysed reaction is glycocholate(out) + n H(+)(out) = glycocholate(in) + n H(+)(in). It carries out the reaction taurocholate(out) + n H(+)(out) = taurocholate(in) + n H(+)(in). The enzyme catalyses dehydroepiandrosterone 3-sulfate(out) + n H(+)(out) = dehydroepiandrosterone 3-sulfate(in) + n H(+)(in). It catalyses the reaction N-acetyl-D-muramoyl-L-alanyl-D-isoglutamine(out) + n H(+)(out) = N-acetyl-D-muramoyl-L-alanyl-D-isoglutamine(in) + n H(+)(in). The catalysed reaction is 2',3'-cGAMP(out) + n H(+)(out) = 2',3'-cGAMP(in) + n H(+)(in). In terms of biological role, lysosomal proton-coupled steroid conjugate and bile acid transporter. Preferentially recognizes lipophilic steroid conjugates or bile acis as endogenous substrates and seems to mediate escape from lysosomes to the cytoplasm. Modulates hepatic cytosolic copper homeostasis, maybe acting as a lysosomal copper transporter and sequestering copper ions in the lysosome. Delivers pathogen-associated molecular patterns to cytosolic pattern recognition receptors as part of the innate immune response to microbes. Selectively transports bacterial muramyl dipeptide (MDP) into the cytosol for recognition by NOD2, triggering inflammatory responses. Likely acts as a redundant importer of cyclic GMP-AMP dinucleotides (cGAMPs) in monocyte and macrophage cell lineages. The transport mechanism, its electrogenicity and stoichiometry remain to be elucidated. The sequence is that of Lysosomal proton-coupled steroid conjugate and bile acid symporter SLC46A3 (Slc46a3) from Mus musculus (Mouse).